We begin with the raw amino-acid sequence, 311 residues long: Methionyl-tRNA formyltransferase (311 aa).

110 to 113 provides a ligand contact to (6S)-5,6,7,8-tetrahydrofolate; it reads SLLP.

It belongs to the Fmt family.

The catalysed reaction is L-methionyl-tRNA(fMet) + (6R)-10-formyltetrahydrofolate = N-formyl-L-methionyl-tRNA(fMet) + (6S)-5,6,7,8-tetrahydrofolate + H(+). In terms of biological role, attaches a formyl group to the free amino group of methionyl-tRNA(fMet). The formyl group appears to play a dual role in the initiator identity of N-formylmethionyl-tRNA by promoting its recognition by IF2 and preventing the misappropriation of this tRNA by the elongation apparatus. The chain is Methionyl-tRNA formyltransferase from Streptococcus equi subsp. zooepidemicus (strain H70).